A 431-amino-acid chain; its full sequence is COBRA-like protein 4 (431 aa).

Residues 1–20 (MRLLFSFCFFFFMIIFTATA) form the signal peptide. N-linked (GlcNAc...) asparagine glycans are attached at residues Asn-29, Asn-154, Asn-162, Asn-201, Asn-226, Asn-306, Asn-321, and Asn-340. Asn-414 is lipidated: GPI-anchor amidated asparagine. A propeptide spans 415–431 (FASFSLTILLLLFISIW) (removed in mature form).

The protein belongs to the COBRA family. As to expression, expressed in roots, stems, leaves, flowers and siliques.

It localises to the cell membrane. The sequence is that of COBRA-like protein 4 (COBL4) from Arabidopsis thaliana (Mouse-ear cress).